The sequence spans 221 residues: Phosphatidylethanolamine-binding protein homolog F40A3.3 (221 aa).

The protein belongs to the phosphatidylethanolamine-binding protein family.

This Caenorhabditis elegans protein is Phosphatidylethanolamine-binding protein homolog F40A3.3.